The primary structure comprises 192 residues: Peptidyl-tRNA hydrolase (192 aa).

His-17 provides a ligand contact to tRNA. The active-site Proton acceptor is His-22. Residues Phe-68, Asn-70, and Asn-116 each contribute to the tRNA site.

The protein belongs to the PTH family. Monomer.

The protein resides in the cytoplasm. It carries out the reaction an N-acyl-L-alpha-aminoacyl-tRNA + H2O = an N-acyl-L-amino acid + a tRNA + H(+). Functionally, hydrolyzes ribosome-free peptidyl-tRNAs (with 1 or more amino acids incorporated), which drop off the ribosome during protein synthesis, or as a result of ribosome stalling. Catalyzes the release of premature peptidyl moieties from peptidyl-tRNA molecules trapped in stalled 50S ribosomal subunits, and thus maintains levels of free tRNAs and 50S ribosomes. The protein is Peptidyl-tRNA hydrolase of Stenotrophomonas maltophilia (strain K279a).